The chain runs to 119 residues: Immunoglobulin heavy variable 2-26 (119 aa).

The N-terminal stretch at 1 to 19 (MDTLCYTLLLLTTPSWVLS) is a signal peptide. Q20 is modified (pyrrolidone carboxylic acid). Residues 20–44 (QVTLKESGPVLVKPTETLTLTCTVS) form a framework-1 region. Residues 20-119 (QVTLKESGPV…DTATYYCARI (100 aa)) enclose the Ig-like domain. A disulfide bridge links C41 with C116. The tract at residues 45–54 (GFSLSNARMG) is complementarity-determining-1. Residues 55–71 (VSWIRQPPGKALEWLAH) are framework-2. Residues 72–78 (IFSNDEK) are complementarity-determining-2. The interval 79-116 (SYSTSLKSRLTISKDTSKSQVVLTMTNMDPVDTATYYC) is framework-3. The segment at 117–119 (ARI) is complementarity-determining-3.

In terms of assembly, immunoglobulins are composed of two identical heavy chains and two identical light chains; disulfide-linked.

It is found in the secreted. It localises to the cell membrane. Functionally, v region of the variable domain of immunoglobulin heavy chains that participates in the antigen recognition. Immunoglobulins, also known as antibodies, are membrane-bound or secreted glycoproteins produced by B lymphocytes. In the recognition phase of humoral immunity, the membrane-bound immunoglobulins serve as receptors which, upon binding of a specific antigen, trigger the clonal expansion and differentiation of B lymphocytes into immunoglobulins-secreting plasma cells. Secreted immunoglobulins mediate the effector phase of humoral immunity, which results in the elimination of bound antigens. The antigen binding site is formed by the variable domain of one heavy chain, together with that of its associated light chain. Thus, each immunoglobulin has two antigen binding sites with remarkable affinity for a particular antigen. The variable domains are assembled by a process called V-(D)-J rearrangement and can then be subjected to somatic hypermutations which, after exposure to antigen and selection, allow affinity maturation for a particular antigen. This chain is Immunoglobulin heavy variable 2-26, found in Homo sapiens (Human).